We begin with the raw amino-acid sequence, 365 residues long: Flagellar P-ring protein (365 aa).

The N-terminal stretch at 1-19 (MIKFLSALILLLVTTAAQA) is a signal peptide.

This sequence belongs to the FlgI family. In terms of assembly, the basal body constitutes a major portion of the flagellar organelle and consists of four rings (L,P,S, and M) mounted on a central rod.

The protein localises to the periplasm. It localises to the bacterial flagellum basal body. In terms of biological role, assembles around the rod to form the L-ring and probably protects the motor/basal body from shearing forces during rotation. This Escherichia coli O9:H4 (strain HS) protein is Flagellar P-ring protein.